A 252-amino-acid chain; its full sequence is Ribosomal RNA small subunit methyltransferase A (252 aa).

The S-adenosyl-L-methionine site is built by N11, L13, G38, E60, D82, and N99.

The protein belongs to the class I-like SAM-binding methyltransferase superfamily. rRNA adenine N(6)-methyltransferase family. RsmA subfamily.

It is found in the cytoplasm. It carries out the reaction adenosine(1518)/adenosine(1519) in 16S rRNA + 4 S-adenosyl-L-methionine = N(6)-dimethyladenosine(1518)/N(6)-dimethyladenosine(1519) in 16S rRNA + 4 S-adenosyl-L-homocysteine + 4 H(+). Specifically dimethylates two adjacent adenosines (A1518 and A1519) in the loop of a conserved hairpin near the 3'-end of 16S rRNA in the 30S particle. May play a critical role in biogenesis of 30S subunits. This is Ribosomal RNA small subunit methyltransferase A from Hydrogenobaculum sp. (strain Y04AAS1).